A 189-amino-acid chain; its full sequence is Putative ankyrin repeat protein TV1425 (189 aa).

ANK repeat units lie at residues 31-60 (YNRT…KLED), 64-93 (EGST…NVNT), 97-126 (SGKT…NVND), and 130-159 (EGET…DISA).

The sequence is that of Putative ankyrin repeat protein TV1425 from Thermoplasma volcanium (strain ATCC 51530 / DSM 4299 / JCM 9571 / NBRC 15438 / GSS1).